The following is a 249-amino-acid chain: Triosephosphate isomerase (249 aa).

2 residues coordinate substrate: asparagine 10 and lysine 12. Histidine 94 serves as the catalytic Electrophile. Glutamate 166 serves as the catalytic Proton acceptor.

This sequence belongs to the triosephosphate isomerase family. Homodimer.

The catalysed reaction is D-glyceraldehyde 3-phosphate = dihydroxyacetone phosphate. It functions in the pathway carbohydrate biosynthesis; gluconeogenesis. Its pathway is carbohydrate degradation; glycolysis; D-glyceraldehyde 3-phosphate from glycerone phosphate: step 1/1. This Emericella nidulans (strain FGSC A4 / ATCC 38163 / CBS 112.46 / NRRL 194 / M139) (Aspergillus nidulans) protein is Triosephosphate isomerase (tpiA).